Reading from the N-terminus, the 68-residue chain is U1-agatoxin-Ta1c (68 aa).

The first 17 residues, 1 to 17, serve as a signal peptide directing secretion; that stretch reads MKLQLMICLVLLPCFFC. 3 cysteine pairs are disulfide-bonded: Cys-23–Cys-53, Cys-39–Cys-49, and Cys-42–Cys-62. Lys-67 carries the post-translational modification Lysine amide.

The protein belongs to the helical arthropod-neuropeptide-derived (HAND) family. As to expression, expressed by the venom gland.

Its subcellular location is the secreted. Functionally, toxin that paralyzes insects. May have a direct effect on the insect central nervous system. The polypeptide is U1-agatoxin-Ta1c (Eratigena agrestis (Hobo spider)).